The primary structure comprises 456 residues: MSTLYDVVIVGGGLTGLNAAYQFKKAGLNVMVLKPKDRFGGRTESIKVEDYWFDLGGQWMGGTHKYLKELCDELGVKSFPQYDEGKHVLEINGKKVYYQGNISNLNKSYNLEGLFESISKIDELSAELNPDKPYAHSKSKEYDQLTVAQWVEKNVKGNDARSIIDWFCRVCVAAEPTEVSFLFFLHFIRTAGNYGLLADIHGGAQQDRLIGGSQQISEGLAKKIGEKHYTLNAPVRSIIQDANQCTIKTDNGSTYRSKYIVVAIPPTLAGRIHYSPSMPPRRDELTQRMPMGSVIKTITIYDEPFWRKEGYSAEAISDKGPIFICYDDSSHDDKKTAIVGFIAASAAKDWAEKSPEERKRAVLDCYARWWGPKALSPRIFLEKSWKEEEYSRGCYLGYTSPGTLYQCGEHLRAPVGRIHWAGTETASVWIGYMEGALESGFRVSKEIKDKLLNSKL.

An S-8alpha-FAD cysteine modification is found at Cys394.

The protein belongs to the flavin monoamine oxidase family. FAD serves as cofactor.

It carries out the reaction a secondary aliphatic amine + O2 + H2O = a primary amine + an aldehyde + H2O2. In Dictyostelium discoideum (Social amoeba), this protein is Probable flavin-containing monoamine oxidase A (maoA).